The primary structure comprises 230 residues: Ribonuclease 3 (230 aa).

Positions 5 to 125 (YSRFYNILGY…VIGAIYLDSD (121 aa)) constitute an RNase III domain. Mg(2+) is bound at residue Glu40. Residue Asp44 is part of the active site. Mg(2+) contacts are provided by Asp111 and Glu114. Glu114 is an active-site residue. The DRBM domain occupies 153 to 223 (DSKSKLQEIL…AEKMIEMLSQ (71 aa)).

Belongs to the ribonuclease III family. Homodimer. Requires Mg(2+) as cofactor.

It localises to the cytoplasm. The enzyme catalyses Endonucleolytic cleavage to 5'-phosphomonoester.. Digests double-stranded RNA. Involved in the processing of primary rRNA transcript to yield the immediate precursors to the large and small rRNAs (23S and 16S). Processes some mRNAs, and tRNAs when they are encoded in the rRNA operon. Processes pre-crRNA and tracrRNA of type II CRISPR loci if present in the organism. This is Ribonuclease 3 from Francisella tularensis subsp. holarctica (strain FTNF002-00 / FTA).